Consider the following 207-residue polypeptide: MPKVTVYNQTGSQVGEIELAEAIFGIEPNEAVLFEAVMMQRASLRQGTHKVKTRSEVRGGGRKPWRQKGTGRARQGSIRSPQWRGGGTVFGPTPRSYAYKLPKKVRRLAIKSALATKVVENNIVVLEDLVLNAPKTKDMVAVLKGLTVEKKALIVTADANESVELSARNIPGVTVITADGVNVLDVLHHDKLIMTKAAVEKVEEVLA.

The interval 45-89 (RQGTHKVKTRSEVRGGGRKPWRQKGTGRARQGSIRSPQWRGGGTV) is disordered. A compositionally biased stretch (basic residues) spans 60 to 71 (GGRKPWRQKGTG).

The protein belongs to the universal ribosomal protein uL4 family. Part of the 50S ribosomal subunit.

In terms of biological role, one of the primary rRNA binding proteins, this protein initially binds near the 5'-end of the 23S rRNA. It is important during the early stages of 50S assembly. It makes multiple contacts with different domains of the 23S rRNA in the assembled 50S subunit and ribosome. Functionally, forms part of the polypeptide exit tunnel. The protein is Large ribosomal subunit protein uL4 of Bacillus mycoides (strain KBAB4) (Bacillus weihenstephanensis).